The sequence spans 130 residues: Small ribosomal subunit protein uS8 (130 aa).

This sequence belongs to the universal ribosomal protein uS8 family. As to quaternary structure, part of the 30S ribosomal subunit. Contacts proteins S5 and S12.

Functionally, one of the primary rRNA binding proteins, it binds directly to 16S rRNA central domain where it helps coordinate assembly of the platform of the 30S subunit. This is Small ribosomal subunit protein uS8 from Mannheimia succiniciproducens (strain KCTC 0769BP / MBEL55E).